A 259-amino-acid polypeptide reads, in one-letter code: MNSDVSSSEHELSQDGSSQNNPSENSVSSPNSNESVNQVELSDNPEVEPQVKNDSVDTANEQSSTSCESNIKGSDTEARLQQLEKEHETLNSQYMRIAADFDNFRKRQTRDQDDLKIQLTCTTLSEILPIVDNFERARQQLNPEGEEAQALHRSYQGLYKQLVEVLKNLGVAPMRVVDQAFDPSLHEAVMREPSDEKAEDIVIEELQRGYHLNGRVLRHALVKVSMGPGPKVINEEIPDQSASNQELSESVDGSTKDEN.

Disordered stretches follow at residues 1–74 (MNSD…IKGS) and 228–259 (PGPKVINEEIPDQSASNQELSESVDGSTKDEN). Low complexity predominate over residues 17-40 (SSQNNPSENSVSSPNSNESVNQVE). 2 stretches are compositionally biased toward polar residues: residues 56-73 (VDTANEQSSTSCESNIKG) and 240-253 (QSASNQELSESVDG).

It belongs to the GrpE family. As to quaternary structure, homodimer.

Its subcellular location is the cytoplasm. Functionally, participates actively in the response to hyperosmotic and heat shock by preventing the aggregation of stress-denatured proteins, in association with DnaK and GrpE. It is the nucleotide exchange factor for DnaK and may function as a thermosensor. Unfolded proteins bind initially to DnaJ; upon interaction with the DnaJ-bound protein, DnaK hydrolyzes its bound ATP, resulting in the formation of a stable complex. GrpE releases ADP from DnaK; ATP binding to DnaK triggers the release of the substrate protein, thus completing the reaction cycle. Several rounds of ATP-dependent interactions between DnaJ, DnaK and GrpE are required for fully efficient folding. The polypeptide is Protein GrpE (Prochlorococcus marinus (strain NATL2A)).